The chain runs to 448 residues: Ribosomal protein uS12 methylthiotransferase RimO (448 aa).

The 111-residue stretch at 16–126 (PKISFVSLGC…VVAAVHEAVP (111 aa)) folds into the MTTase N-terminal domain. Cysteine 25, cysteine 61, cysteine 90, cysteine 157, cysteine 161, and cysteine 164 together coordinate [4Fe-4S] cluster. Residues 143 to 380 (LTPRHYAYLK…METQNGIALR (238 aa)) enclose the Radical SAM core domain. The TRAM domain maps to 383–448 (RAKVGKRLPV…EAYDLYGSVA (66 aa)).

This sequence belongs to the methylthiotransferase family. RimO subfamily. The cofactor is [4Fe-4S] cluster.

It is found in the cytoplasm. The catalysed reaction is L-aspartate(89)-[ribosomal protein uS12]-hydrogen + (sulfur carrier)-SH + AH2 + 2 S-adenosyl-L-methionine = 3-methylsulfanyl-L-aspartate(89)-[ribosomal protein uS12]-hydrogen + (sulfur carrier)-H + 5'-deoxyadenosine + L-methionine + A + S-adenosyl-L-homocysteine + 2 H(+). Its function is as follows. Catalyzes the methylthiolation of an aspartic acid residue of ribosomal protein uS12. The protein is Ribosomal protein uS12 methylthiotransferase RimO of Methylobacterium radiotolerans (strain ATCC 27329 / DSM 1819 / JCM 2831 / NBRC 15690 / NCIMB 10815 / 0-1).